Reading from the N-terminus, the 122-residue chain is Large ribosomal subunit protein uL14 (122 aa).

This sequence belongs to the universal ribosomal protein uL14 family. In terms of assembly, part of the 50S ribosomal subunit. Forms a cluster with proteins L3 and L19. In the 70S ribosome, L14 and L19 interact and together make contacts with the 16S rRNA in bridges B5 and B8.

Binds to 23S rRNA. Forms part of two intersubunit bridges in the 70S ribosome. In Paracoccus denitrificans (strain Pd 1222), this protein is Large ribosomal subunit protein uL14.